The sequence spans 90 residues: Protein RALF-like 29 (90 aa).

The N-terminal stretch at 1-25 is a signal peptide; sequence MIKTKEVTFVTILIVLCVFISTIHA. 2 disulfides stabilise this stretch: Cys41–Cys50 and Cys63–Cys69.

The protein belongs to the plant rapid alkalinization factor (RALF) family.

It localises to the secreted. Functionally, cell signaling peptide that may regulate plant stress, growth, and development. Mediates a rapid alkalinization of extracellular space by mediating a transient increase in the cytoplasmic Ca(2+) concentration leading to a calcium-dependent signaling events through a cell surface receptor and a concomitant activation of some intracellular mitogen-activated protein kinases. The chain is Protein RALF-like 29 (RALFL29) from Arabidopsis thaliana (Mouse-ear cress).